Consider the following 151-residue polypeptide: Ribosome maturation factor RimP (151 aa).

The protein belongs to the RimP family.

It localises to the cytoplasm. Its function is as follows. Required for maturation of 30S ribosomal subunits. The polypeptide is Ribosome maturation factor RimP (Shewanella frigidimarina (strain NCIMB 400)).